A 258-amino-acid polypeptide reads, in one-letter code: uncharacterized protein (258 aa).

This is an uncharacterized protein from Methanocaldococcus jannaschii (strain ATCC 43067 / DSM 2661 / JAL-1 / JCM 10045 / NBRC 100440) (Methanococcus jannaschii).